We begin with the raw amino-acid sequence, 380 residues long: Chaperone protein DnaJ (380 aa).

A J domain is found at 6-71 (DYYESLEVSR…QKRAAYDRYG (66 aa)). The CR-type zinc finger occupies 136 to 215 (GVTKDVEVRT…CHGTGTEAKT (80 aa)). The Zn(2+) site is built by C149, C152, C167, C170, C189, C192, C203, and C206. CXXCXGXG motif repeat units follow at residues 149 to 156 (CEACHGSG), 167 to 174 (CPTCHGAG), 189 to 196 (CPTCHGSG), and 203 to 210 (CKVCHGTG).

It belongs to the DnaJ family. Homodimer. Zn(2+) serves as cofactor.

The protein localises to the cytoplasm. Its function is as follows. Participates actively in the response to hyperosmotic and heat shock by preventing the aggregation of stress-denatured proteins and by disaggregating proteins, also in an autonomous, DnaK-independent fashion. Unfolded proteins bind initially to DnaJ; upon interaction with the DnaJ-bound protein, DnaK hydrolyzes its bound ATP, resulting in the formation of a stable complex. GrpE releases ADP from DnaK; ATP binding to DnaK triggers the release of the substrate protein, thus completing the reaction cycle. Several rounds of ATP-dependent interactions between DnaJ, DnaK and GrpE are required for fully efficient folding. Also involved, together with DnaK and GrpE, in the DNA replication of plasmids through activation of initiation proteins. The sequence is that of Chaperone protein DnaJ from Gluconobacter oxydans (strain 621H) (Gluconobacter suboxydans).